Consider the following 548-residue polypeptide: Pentatricopeptide repeat-containing protein At1g62680, mitochondrial (548 aa).

A mitochondrion-targeting transit peptide spans 1-43 (MQRSIAMTAKRFLHRNLLENGKPRTASSPSFSHCSSCRCWVRA). PPR repeat units follow at residues 84–118 (SIVD…GIRN), 119–153 (DLYT…GYEP), 154–188 (DRVT…GYKP), 189–223 (DIVA…GIRP), 224–258 (NVVT…KITP), 259–293 (NVIT…SIDP), 294–328 (DIVT…GCLA), 329–363 (DVVS…GLVS), 364–398 (NTVT…GISP), 399–433 (DIWT…EMDL), 434–468 (DIVT…GLKP), and 469–503 (DIVT…GLMK).

The protein belongs to the PPR family. P subfamily.

It localises to the mitochondrion. This is Pentatricopeptide repeat-containing protein At1g62680, mitochondrial from Arabidopsis thaliana (Mouse-ear cress).